We begin with the raw amino-acid sequence, 83 residues long: Mitochondrial import inner membrane translocase subunit Tim8 (83 aa).

The Twin CX3C motif signature appears at 35 to 60 (CWDVCFSDYRPPSKMDGKTQTCIQNC). Intrachain disulfides connect cysteine 35/cysteine 60 and cysteine 39/cysteine 56.

This sequence belongs to the small Tim family. As to quaternary structure, heterohexamer; composed of 3 copies of ddp-1/tim-8 and 3 copies of tin-13/tim-13, named soluble 70 kDa complex. Associates with the TIM22 complex, whose core is composed of tim-22.

It is found in the mitochondrion inner membrane. Mitochondrial intermembrane chaperone that participates in the import and insertion of some multi-pass transmembrane proteins into the mitochondrial inner membrane. Also required for the transfer of beta-barrel precursors from the TOM complex to the sorting and assembly machinery (SAM complex) of the outer membrane. Acts as a chaperone-like protein that protects the hydrophobic precursors from aggregation and guide them through the mitochondrial intermembrane space. The ddp-1/tim-8-tim-13 complex mediates the import of some proteins while the predominant tim-9/tin-9.1-tim-10/tin-10 70 kDa complex mediates the import of much more proteins. The sequence is that of Mitochondrial import inner membrane translocase subunit Tim8 from Caenorhabditis briggsae.